Here is a 561-residue protein sequence, read N- to C-terminus: Arginine--tRNA ligase (561 aa).

The 'HIGH' region motif lies at 128–138 (ANPTGPLHVGH).

This sequence belongs to the class-I aminoacyl-tRNA synthetase family. Monomer.

It localises to the cytoplasm. It carries out the reaction tRNA(Arg) + L-arginine + ATP = L-arginyl-tRNA(Arg) + AMP + diphosphate. This chain is Arginine--tRNA ligase, found in Chromohalobacter salexigens (strain ATCC BAA-138 / DSM 3043 / CIP 106854 / NCIMB 13768 / 1H11).